The chain runs to 331 residues: Tetraacyldisaccharide 4'-kinase (331 aa).

55–62 (TAGGNGKT) lines the ATP pocket.

This sequence belongs to the LpxK family.

It catalyses the reaction a lipid A disaccharide + ATP = a lipid IVA + ADP + H(+). It participates in glycolipid biosynthesis; lipid IV(A) biosynthesis; lipid IV(A) from (3R)-3-hydroxytetradecanoyl-[acyl-carrier-protein] and UDP-N-acetyl-alpha-D-glucosamine: step 6/6. In terms of biological role, transfers the gamma-phosphate of ATP to the 4'-position of a tetraacyldisaccharide 1-phosphate intermediate (termed DS-1-P) to form tetraacyldisaccharide 1,4'-bis-phosphate (lipid IVA). The sequence is that of Tetraacyldisaccharide 4'-kinase from Edwardsiella ictaluri (strain 93-146).